We begin with the raw amino-acid sequence, 368 residues long: 1-deoxy-D-xylulose 5-phosphate reductoisomerase (368 aa).

Residues Thr7, Gly8, Ser9, Ile10, Gly31, Lys32, Asn33, and Asn113 each coordinate NADPH. Lys114 lines the 1-deoxy-D-xylulose 5-phosphate pocket. Residue Glu115 participates in NADPH binding. Asp133 is a Mn(2+) binding site. 4 residues coordinate 1-deoxy-D-xylulose 5-phosphate: Ser134, Glu135, Ser158, and His181. A Mn(2+)-binding site is contributed by Glu135. Gly187 provides a ligand contact to NADPH. Residues Ser194, Asn199, Lys200, and Glu203 each contribute to the 1-deoxy-D-xylulose 5-phosphate site. Residue Glu203 participates in Mn(2+) binding.

This sequence belongs to the DXR family. Mg(2+) serves as cofactor. Requires Mn(2+) as cofactor.

The catalysed reaction is 2-C-methyl-D-erythritol 4-phosphate + NADP(+) = 1-deoxy-D-xylulose 5-phosphate + NADPH + H(+). It participates in isoprenoid biosynthesis; isopentenyl diphosphate biosynthesis via DXP pathway; isopentenyl diphosphate from 1-deoxy-D-xylulose 5-phosphate: step 1/6. Its function is as follows. Catalyzes the NADPH-dependent rearrangement and reduction of 1-deoxy-D-xylulose-5-phosphate (DXP) to 2-C-methyl-D-erythritol 4-phosphate (MEP). The protein is 1-deoxy-D-xylulose 5-phosphate reductoisomerase of Helicobacter pylori (strain J99 / ATCC 700824) (Campylobacter pylori J99).